The sequence spans 600 residues: Glutamine--fructose-6-phosphate aminotransferase [isomerizing] (600 aa).

Cys-2 functions as the Nucleophile; for GATase activity in the catalytic mechanism. The region spanning 2 to 217 (CGIVGFIGEQ…DKEIVIVMKE (216 aa)) is the Glutamine amidotransferase type-2 domain. SIS domains lie at 283 to 422 (IRNA…AKGE) and 452 to 590 (LAKQ…VDKP). The For Fru-6P isomerization activity role is filled by Lys-595.

As to quaternary structure, homodimer.

The protein localises to the cytoplasm. It catalyses the reaction D-fructose 6-phosphate + L-glutamine = D-glucosamine 6-phosphate + L-glutamate. Functionally, catalyzes the first step in hexosamine metabolism, converting fructose-6P into glucosamine-6P using glutamine as a nitrogen source. This chain is Glutamine--fructose-6-phosphate aminotransferase [isomerizing], found in Bacillus anthracis.